The sequence spans 108 residues: Putative lipid-binding protein AIR1B (108 aa).

The N-terminal stretch at 1–23 (MAPRTSLALFVSLNLLFFTCTSA) is a signal peptide. Cystine bridges form between C28-C55, C35-C54, and C71-C107.

It belongs to the plant LTP family. PEARLI1 subfamily.

It is found in the secreted. The polypeptide is Putative lipid-binding protein AIR1B (AIR1B) (Arabidopsis thaliana (Mouse-ear cress)).